Consider the following 603-residue polypeptide: NAD 5'-nucleotidase (603 aa).

Positions 1 to 25 (MLLSKKSASFALSAFAMLFTSVALA) are cleaved as a signal peptide. Residues Asp44, His46, Asp94, Asn126, and His227 each coordinate Zn(2+). Residues Arg397, Arg437, Phe456, and 540–546 (YVAGGKD) contribute to the substrate site.

This sequence belongs to the 5'-nucleotidase family. Zn(2+) serves as cofactor.

It is found in the periplasm. The catalysed reaction is a ribonucleoside 5'-phosphate + H2O = a ribonucleoside + phosphate. Its function is as follows. Degrades NAD into adenosine and nicotinamide riboside, the latter being subsequently internalized by a specific permease. Also endowed with NAD(P) pyrophosphatase activity. Exhibits a broad substrate specificity, recognizing either mono- or dinucleotide nicotinamides and different adenosine phosphates with a maximal activity on 5'-adenosine monophosphate. The sequence is that of NAD 5'-nucleotidase from Haemophilus influenzae (strain ATCC 51907 / DSM 11121 / KW20 / Rd).